We begin with the raw amino-acid sequence, 459 residues long: Putrescine aminotransferase (459 aa).

Residues 150-151 (GT) and Gln274 each bind pyridoxal 5'-phosphate. Residue Lys300 is modified to N6-(pyridoxal phosphate)lysine. Thr332 contacts pyridoxal 5'-phosphate.

The protein belongs to the class-III pyridoxal-phosphate-dependent aminotransferase family. Putrescine aminotransferase subfamily. Pyridoxal 5'-phosphate is required as a cofactor.

The enzyme catalyses an alkane-alpha,omega-diamine + 2-oxoglutarate = an omega-aminoaldehyde + L-glutamate. It carries out the reaction putrescine + 2-oxoglutarate = 1-pyrroline + L-glutamate + H2O. It catalyses the reaction cadaverine + 2-oxoglutarate = 5-aminopentanal + L-glutamate. The protein operates within amine and polyamine degradation; putrescine degradation; 4-aminobutanal from putrescine (transaminase route): step 1/1. Functionally, catalyzes the aminotransferase reaction from putrescine to 2-oxoglutarate, leading to glutamate and 4-aminobutanal, which spontaneously cyclizes to form 1-pyrroline. This is the first step in one of two pathways for putrescine degradation, where putrescine is converted into 4-aminobutanoate (gamma-aminobutyrate or GABA) via 4-aminobutanal. Also functions as a cadaverine transaminase in a a L-lysine degradation pathway to succinate that proceeds via cadaverine, glutarate and L-2-hydroxyglutarate. This is Putrescine aminotransferase from Shigella boydii serotype 4 (strain Sb227).